A 527-amino-acid polypeptide reads, in one-letter code: BTB/POZ domain-containing protein At4g01160 (527 aa).

The BTB domain occupies 111-180 (NNNTSVLSVQ…MYSNSLSVTA (70 aa)). Residues 233–327 (VKPLTNAARQ…HMTTDRLKKI (95 aa)) form the BACK domain.

It functions in the pathway protein modification; protein ubiquitination. Its function is as follows. May act as a substrate-specific adapter of an E3 ubiquitin-protein ligase complex (CUL3-RBX1-BTB) which mediates the ubiquitination and subsequent proteasomal degradation of target proteins. The polypeptide is BTB/POZ domain-containing protein At4g01160 (Arabidopsis thaliana (Mouse-ear cress)).